Reading from the N-terminus, the 202-residue chain is Large ribosomal subunit protein bL25 (202 aa).

Belongs to the bacterial ribosomal protein bL25 family. CTC subfamily. Part of the 50S ribosomal subunit; part of the 5S rRNA/L5/L18/L25 subcomplex. Contacts the 5S rRNA. Binds to the 5S rRNA independently of L5 and L18.

This is one of the proteins that binds to the 5S RNA in the ribosome where it forms part of the central protuberance. This Rickettsia bellii (strain OSU 85-389) protein is Large ribosomal subunit protein bL25.